The primary structure comprises 369 residues: Dehydrogenase pigH (369 aa).

Positions 13-367 (KAPLLEVKAA…QGVSAKKIVV (355 aa)) constitute an Enoyl reductase (ER) domain. 44–49 (IDWLIQ) provides a ligand contact to NADP(+). Residues N79 and N101 are each glycosylated (N-linked (GlcNAc...) asparagine). NADP(+) contacts are provided by residues 197–200 (SRKN) and Y215. Residues 280 to 300 (TIIFFVSWIISFKFKGLLKGI) form a helical membrane-spanning segment. Residue 360-361 (VS) coordinates NADP(+).

It belongs to the zinc-containing alcohol dehydrogenase family.

It is found in the membrane. It participates in secondary metabolite biosynthesis. Functionally, dehydrogenase; part of the gene cluster that mediates the biosynthesis of azaphilone pigments (MonAzPs), a complex mixture of compounds with a common azaphilone skeleton very widely used as food colorants. Within the pathway, pigH might be involved in the late steps of yellow pigments monascin and ankaflavin biosynthesis. The first step of the pathway is performed by the nrPKS pigA that forms the hexaketide precursor from successive condensations of five malonyl-CoA units, with a simple acetyl-CoA starter unit. The role of esterase pigG is not clear, but it may play at most a supplementary role in the formation of the benzaldehyde produced by the pigA nrPKS. This very reactive benzaldehyde is intercepted by the pigC ketoreductase that to provide the first stable enzyme-free MonAzPs intermediate, 6-(4-hydroxy-2-oxopentyl)-3-methyl-2,4-dioxocyclohexane carbaldehyde, also known as M7PKS-1. The FAD-dependent monooxygenase pigN hydroxylates M7PKS-1 at C-4, which triggers the formation of the pyran ring. PigJ, pigK and pigD are involved in the acetylation of the pyran ring. PigJ and pigK form the two subunits of a dedicated fungal FAS that produces the side chain fatty acyl moiety of MonAzPs and pigD transfers the fatty acyl chain to the C-4 alcohol. PigM and pigO are involved in the elimination of the omega-1 alcohol. PigM acts as an O-acetyltransferase that synthesizes the putative O-11 acetyl intermediate whereas pigO eliminates acetic acid to yield an intermediate with a C10(11) double bond. The dehydration of the C-11 alcohol followed by the reduction of the C6(7) double bond by the NAD(P)H-dependent oxidoreductase pigE increases the electrophilicity of the C-5 ketone of the resulting acyl benzopyran. This in turn sets up the C-5 ketone for an intramolecular Knoevenagel aldol condensation with the C-20 enol of the side chain. This condensation affords the characteristic linear tricyclic carbon skeletons of the yellow pigments that serve as the common precursors for the classical yellow pigments monascin and ankaflavin, orange pigments rubopunctatin and monascorubrin, and red pigments ribropunctamine and monascorubramine. The FAD-dependent oxidoreductase pigF is especially invoved in the biosynthesis of orange and red pigments via desaturation of C6(7). The chain is Dehydrogenase pigH from Monascus ruber (Mold).